Here is a 668-residue protein sequence, read N- to C-terminus: DNA ligase (668 aa).

NAD(+) contacts are provided by residues 37–41, 86–87, and glutamate 116; these read DNVYD and SM. Residue lysine 118 is the N6-AMP-lysine intermediate of the active site. Positions 139, 173, 288, and 312 each coordinate NAD(+). Zn(2+) is bound by residues cysteine 406, cysteine 409, cysteine 424, and cysteine 429. One can recognise a BRCT domain in the interval 591–668; sequence IPDNPFKDKT…TEEEAIAQIK (78 aa).

Belongs to the NAD-dependent DNA ligase family. LigA subfamily. Mg(2+) serves as cofactor. Requires Mn(2+) as cofactor.

The catalysed reaction is NAD(+) + (deoxyribonucleotide)n-3'-hydroxyl + 5'-phospho-(deoxyribonucleotide)m = (deoxyribonucleotide)n+m + AMP + beta-nicotinamide D-nucleotide.. In terms of biological role, DNA ligase that catalyzes the formation of phosphodiester linkages between 5'-phosphoryl and 3'-hydroxyl groups in double-stranded DNA using NAD as a coenzyme and as the energy source for the reaction. It is essential for DNA replication and repair of damaged DNA. This Lactobacillus acidophilus (strain ATCC 700396 / NCK56 / N2 / NCFM) protein is DNA ligase.